The chain runs to 477 residues: Bifunctional protein HldE (477 aa).

A ribokinase region spans residues 1 to 318 (MKLSMPRFDQ…RAIQREEGSE (318 aa)). 194-197 (NLSE) contacts ATP. The active site involves D263. Positions 343–477 (FTNGCFDILH…EKIRKTDKAE (135 aa)) are cytidylyltransferase.

This sequence in the N-terminal section; belongs to the carbohydrate kinase PfkB family. It in the C-terminal section; belongs to the cytidylyltransferase family. As to quaternary structure, homodimer.

The catalysed reaction is D-glycero-beta-D-manno-heptose 7-phosphate + ATP = D-glycero-beta-D-manno-heptose 1,7-bisphosphate + ADP + H(+). It carries out the reaction D-glycero-beta-D-manno-heptose 1-phosphate + ATP + H(+) = ADP-D-glycero-beta-D-manno-heptose + diphosphate. Its pathway is nucleotide-sugar biosynthesis; ADP-L-glycero-beta-D-manno-heptose biosynthesis; ADP-L-glycero-beta-D-manno-heptose from D-glycero-beta-D-manno-heptose 7-phosphate: step 1/4. It participates in nucleotide-sugar biosynthesis; ADP-L-glycero-beta-D-manno-heptose biosynthesis; ADP-L-glycero-beta-D-manno-heptose from D-glycero-beta-D-manno-heptose 7-phosphate: step 3/4. Functionally, catalyzes the phosphorylation of D-glycero-D-manno-heptose 7-phosphate at the C-1 position to selectively form D-glycero-beta-D-manno-heptose-1,7-bisphosphate. Its function is as follows. Catalyzes the ADP transfer from ATP to D-glycero-beta-D-manno-heptose 1-phosphate, yielding ADP-D-glycero-beta-D-manno-heptose. The chain is Bifunctional protein HldE from Pseudomonas fluorescens (strain ATCC BAA-477 / NRRL B-23932 / Pf-5).